Reading from the N-terminus, the 337-residue chain is Ferredoxin--NADP reductase (337 aa).

The FAD site is built by Asp-33, Gln-41, Tyr-46, Ala-86, Phe-120, Asp-286, and Thr-327.

Belongs to the ferredoxin--NADP reductase type 2 family. Homodimer. Requires FAD as cofactor.

It catalyses the reaction 2 reduced [2Fe-2S]-[ferredoxin] + NADP(+) + H(+) = 2 oxidized [2Fe-2S]-[ferredoxin] + NADPH. The chain is Ferredoxin--NADP reductase from Rickettsia canadensis (strain McKiel).